A 348-amino-acid polypeptide reads, in one-letter code: VIP36-like protein (348 aa).

The signal sequence occupies residues 1–38 (MAATLGPLGSWQQWRRCLLARDGSRMLLLLLLLGSGQG). Over 39-313 (PQQVGAGQTF…APLPPLSGLA (275 aa)) the chain is Lumenal. The 226-residue stretch at 49-274 (EYLKREHSLS…DVISLKLFEL (226 aa)) folds into the L-type lectin-like domain. A carbohydrate contacts are provided by Ser-93 and Asp-128. Positions 159, 161, and 163 each coordinate Ca(2+). 161 to 163 (YPN) contacts a carbohydrate. A glycan (N-linked (GlcNAc...) asparagine) is linked at Asn-181. His-188 is an a carbohydrate binding site. Position 191 (Asp-191) interacts with Ca(2+). Residues Cys-200 and Cys-237 are joined by a disulfide bond. 258–260 (GDL) is a binding site for a carbohydrate. A helical membrane pass occupies residues 314 to 334 (LFHIVFFSLVIFVFAIVIGII). At 335 to 348 (LYNKWQEQSRKRFY) the chain is on the cytoplasmic side. The Endoplasmic reticulum retention signal signature appears at 344 to 346 (RKR).

The protein resides in the endoplasmic reticulum membrane. The protein localises to the golgi apparatus membrane. Its function is as follows. May be involved in the regulation of export from the endoplasmic reticulum of a subset of glycoproteins. May function as a regulator of ERGIC-53. The sequence is that of VIP36-like protein (LMAN2L) from Pongo abelii (Sumatran orangutan).